A 397-amino-acid chain; its full sequence is Putative gustatory receptor 85a (397 aa).

At 1-56 (MYSLIEAQLLGGKLVNRVMASLRRIIQRSLGYFCALNGILDFNTDIGTGNLRRYRV) the chain is on the cytoplasmic side. Residues 57 to 77 (LFMYRLLHNFAVISLTLKFLF) traverse the membrane as a helical segment. At 78-90 (DFTDHFKYIESST) the chain is on the extracellular side. The chain crosses the membrane as a helical span at residues 91 to 111 (LITVNFFTYFTLVFFALLSSM). Residues 112 to 151 (GSCYQWQNRILAVLKELKHQRDLSRHMGYRVPRSKQNSID) are Cytoplasmic-facing. The helical transmembrane segment at 152–172 (YLLFALTVLLILRLSIHLATF) threads the bilayer. Topologically, residues 173-186 (TLSARMGFNHPCNC) are extracellular. A helical membrane pass occupies residues 187–207 (FLPECMIFSMNYLLFAILAEI). The Cytoplasmic portion of the chain corresponds to 208 to 268 (TRCWWSLQSG…RYVTLAYMAR (61 aa)). Residues 269–289 (NLWSGIVAGYLLVRFVIGNGL) traverse the membrane as a helical segment. At 290–293 (QDVE) the chain is on the extracellular side. The helical transmembrane segment at 294–314 (LVYLVFSFITCIQPLMLSLLV) threads the bilayer. The Cytoplasmic segment spans residues 315-375 (NSMTSTTGSL…FRINRSLAFR (61 aa)). A helical transmembrane segment spans residues 376–396 (SASLILVHVLYMVQSDYISIT). A topological domain (extracellular) is located at residue Asn-397.

Belongs to the insect chemoreceptor superfamily. Gustatory receptor (GR) family. Gr22e subfamily.

The protein localises to the cell membrane. In terms of biological role, probable gustatory receptor which mediates acceptance or avoidance behavior, depending on its substrates. The chain is Putative gustatory receptor 85a (Gr85a) from Drosophila melanogaster (Fruit fly).